The primary structure comprises 419 residues: NFATC2-interacting protein (419 aa).

2 disordered regions span residues Met-1–Lys-131 and Asp-151–Ala-215. The span at Trp-11–Gly-27 shows a compositional bias: gly residues. Over residues Gln-35–Val-51 the composition is skewed to low complexity. Phosphoserine occurs at positions 54, 84, 88, 90, 92, and 127. Glycyl lysine isopeptide (Lys-Gly) (interchain with G-Cter in SUMO2) cross-links involve residues Lys-129 and Lys-131. A compositionally biased stretch (basic and acidic residues) spans Arg-180–Phe-192. Ser-198, Ser-201, Ser-204, Ser-220, and Ser-314 each carry phosphoserine. A coiled-coil region spans residues Ser-209–Ser-231. Thr-316 and Thr-318 each carry phosphothreonine. Residues Leu-348–Gly-419 enclose the Ubiquitin-like domain. 2 positions are modified to phosphoserine: Ser-369 and Ser-390.

As to quaternary structure, interacts with NFATC2, TRAF1, TRAF2 and PRMT1. Interacts with UBE2I/UBC9. Post-translationally, methylation at the N-terminus by PRMT1 modulates interaction with the NFAT complex and results in augmented cytokine production.

The protein localises to the nucleus. It localises to the cytoplasm. Functionally, in T-helper 2 (Th2) cells, regulates the magnitude of NFAT-driven transcription of a specific subset of cytokine genes, including IL3, IL4, IL5 and IL13, but not IL2. Recruits PRMT1 to the IL4 promoter; this leads to enhancement of histone H4 'Arg-3'-methylation and facilitates subsequent histone acetylation at the IL4 locus, thus promotes robust cytokine expression. Down-regulates formation of poly-SUMO chains by UBE2I/UBC9. This Homo sapiens (Human) protein is NFATC2-interacting protein (NFATC2IP).